A 204-amino-acid polypeptide reads, in one-letter code: Small rubber particle protein (204 aa).

This sequence belongs to the REF/SRPP family. In terms of assembly, auto-assembles in solution into stable nanomultimers of a globular nature. Post-translationally, not glycosylated. In terms of processing, the N-terminus is blocked. Consistent shifts of about 266 Da observed by MS in various forms of the intact protein suggest the addition of stearolyl groups. Highly expressed in the specialized vessel laticifers, but localized only in the laticifer layers in the conducting phloem. Also detected in leaves.

It localises to the cytoplasm. Involved in the biosynthesis of rubber, an isoprenoid polymer (cis-1,4-polyisoprene). The sequence is that of Small rubber particle protein from Hevea brasiliensis (Para rubber tree).